The primary structure comprises 308 residues: MLNEAAGARRIDVLDEVTPTMAEDVLRLVAEAARTDGQQAVSEQGRLQLRGRREGVRHLLLTEEPSGKLVGYAQLEDTDPVEAPAAELVVHPAHRGQGHGRALGVTLLRESGKRLRVWAHGGHSSARHLAQVLGLTLFRELRQMRRPLGPPATLDIPEPVLPEGVTVRTFRPGEDEAAWLAANAAAFAHHPEQGSLTLRDLEDRMGEPWFDPEGFFLAERGGEIVGFHWTKVHAQERLGEVYVVGVRPEAQGGGLGRSLTAIGLRHLAGRGLPTAMLYVDADNFPAVAVYGRQGFTTYETDLMYRTET.

N-acetyltransferase domains are found at residues 12–149 (DVLD…RPLG) and 165–308 (VTVR…RTET). A 1D-myo-inositol 2-(L-cysteinylamino)-2-deoxy-alpha-D-glucopyranoside-binding site is contributed by Glu43. Acetyl-CoA is bound at residue 88–90 (LVV). 1D-myo-inositol 2-(L-cysteinylamino)-2-deoxy-alpha-D-glucopyranoside contacts are provided by Glu192, Lys231, and Glu240. Acetyl-CoA contacts are provided by residues 244–246 (VGV) and 251–257 (QGGGLGR). Tyr278 lines the 1D-myo-inositol 2-(L-cysteinylamino)-2-deoxy-alpha-D-glucopyranoside pocket.

This sequence belongs to the acetyltransferase family. MshD subfamily. Monomer.

The catalysed reaction is 1D-myo-inositol 2-(L-cysteinylamino)-2-deoxy-alpha-D-glucopyranoside + acetyl-CoA = mycothiol + CoA + H(+). In terms of biological role, catalyzes the transfer of acetyl from acetyl-CoA to desacetylmycothiol (Cys-GlcN-Ins) to form mycothiol. The protein is Mycothiol acetyltransferase of Streptomyces bingchenggensis (strain BCW-1).